Reading from the N-terminus, the 165-residue chain is Small histone ubiquitination factor 1 (165 aa).

Residues 1-17 (MSSRRNDYHYDGNDHQY) are compositionally biased toward basic and acidic residues. Residues 1-86 (MSSRRNDYHY…STRASFGAAS (86 aa)) form a disordered region. Low complexity-rich tracts occupy residues 29-38 (SFYESSYRSR) and 50-60 (SSYDSPSSSTN). Polar residues predominate over residues 73 to 86 (PSNNSTRASFGAAS).

As to quaternary structure, component of the histone H2B ubiquitin ligase complex (HULC) composed of at least brl1, brl2, rhp6 and shf1.

The protein resides in the nucleus. It is found in the cytoplasm. It localises to the cytoskeleton. Its subcellular location is the microtubule organizing center. The protein localises to the spindle pole body. Its function is as follows. Component of the histone H2B ubiquitin ligase complex (HULC) which plays a role in transcription regulation by catalyzing the monoubiquitination of histone H2B to form H2BK123ub1. H2BK123ub1 gives a specific tag for epigenetic transcriptional activation and is also a prerequisite for H3K4me and H3K79me formation. In Schizosaccharomyces pombe (strain 972 / ATCC 24843) (Fission yeast), this protein is Small histone ubiquitination factor 1 (shf1).